Reading from the N-terminus, the 59-residue chain is Large ribosomal subunit protein bL32 (59 aa).

The interval 1-59 (MAVQQNRKTPSKRGMRRSHDSLSKPTLSTEQNTGETHRRHHISADGYYRGRKVTRGQDD) is disordered. The span at 23–34 (SKPTLSTEQNTG) shows a compositional bias: polar residues. A compositionally biased stretch (basic residues) spans 49 to 59 (RGRKVTRGQDD).

The protein belongs to the bacterial ribosomal protein bL32 family.

This Halorhodospira halophila (strain DSM 244 / SL1) (Ectothiorhodospira halophila (strain DSM 244 / SL1)) protein is Large ribosomal subunit protein bL32.